Here is a 209-residue protein sequence, read N- to C-terminus: Kinetochore protein Spc25 (209 aa).

Positions 74 to 107 (TRAVREKLAEERQKNAEMQAQLEKANDERIEQMD) form a coiled coil.

The protein belongs to the SPC25 family. Component of the Ndc80 complex, which is composed of Ndc80, Nuf2 and Spc25.

It localises to the nucleus. The protein resides in the chromosome. It is found in the centromere. Its subcellular location is the kinetochore. Acts as a component of the essential kinetochore-associated Ndc80 complex, which is required for chromosome segregation and spindle checkpoint activity during meiosis and mitosis. Required for kinetochore integrity and the organization of stable microtubule binding sites in the outer plate of the kinetochore. Participates in SAC signaling that responds specifically to disruptions in spindle microtubule dynamics. The NDC80 complex synergistically enhances the affinity of the SKA1 complex for microtubules and may allow the NDC80 complex to track depolymerizing microtubules. The sequence is that of Kinetochore protein Spc25 from Drosophila grimshawi (Hawaiian fruit fly).